Here is a 288-residue protein sequence, read N- to C-terminus: uncharacterized protein (288 aa).

The protein to M.bovis Mb1522c, M.leprae ML1804 and M.avium MAV321.

This is an uncharacterized protein from Mycobacterium tuberculosis (strain ATCC 25618 / H37Rv).